The sequence spans 635 residues: PTS system fructose-specific EIIABC component (635 aa).

Positions 5–149 constitute a PTS EIIA type-2 domain; sequence ELLTKHTIKL…DAIIDIINQH (145 aa). Catalysis depends on H67, which acts as the Tele-phosphohistidine intermediate; for EIIA activity. The residue at position 67 (H67) is a Phosphohistidine; by HPr. The tract at residues 149 to 168 is disordered; that stretch reads HDKDDDEEEEEEEAAPAPAG. Acidic residues predominate over residues 152–162; that stretch reads DDDEEEEEEEA. A PTS EIIB type-2 domain is found at 172–267; that stretch reads ILAVTACPTG…PQELIEKAMN (96 aa). C178 (phosphocysteine intermediate; for EIIB activity) is an active-site residue. The residue at position 178 (C178) is a Phosphocysteine; by EIIA. The interval 273–293 is disordered; the sequence is YQGSGGGSAASNDDEEAKGKS. The PTS EIIC type-2 domain occupies 301-635; sequence FYKHLMSGVS…GIVKKPVTEK (335 aa). A run of 9 helical transmembrane segments spans residues 312–332, 350–370, 392–412, 428–448, 470–490, 511–531, 544–564, 569–589, and 608–628; these read MLPF…WGIH, FIGG…FIAM, NAGF…VILL, PVLI…QFVV, NLVL…GGPL, AAIM…TTIF, ITCY…FAAA, VIPA…FFRV, and MLYL…LGIV.

Its subcellular location is the cell membrane. It catalyses the reaction D-fructose(out) + N(pros)-phospho-L-histidyl-[protein] = D-fructose 1-phosphate(in) + L-histidyl-[protein]. Its function is as follows. The phosphoenolpyruvate-dependent sugar phosphotransferase system (sugar PTS), a major carbohydrate active transport system, catalyzes the phosphorylation of incoming sugar substrates concomitantly with their translocation across the cell membrane. This system is involved in fructose transport. The chain is PTS system fructose-specific EIIABC component (fruA) from Bacillus subtilis (strain 168).